The chain runs to 837 residues: Semaphorin-4B (837 aa).

The N-terminal stretch at 1–43 is a signal peptide; it reads MLRTAMGLRSWLAAPWGALPPRPPLLLLLLLLLLLQPPPPTWA. Over 44-717 the chain is Extracellular; that stretch reads LSPRISLPLG…WGADRSYWKE (674 aa). Positions 47–523 constitute a Sema domain; the sequence is RISLPLGSEE…SHSGVVQVPM (477 aa). N-linked (GlcNAc...) asparagine glycosylation is found at N69 and N96. 2 disulfides stabilise this stretch: C120–C131 and C149–C158. N-linked (GlcNAc...) asparagine glycosylation occurs at N165. Cystine bridges form between C286–C399 and C310–C359. N-linked (GlcNAc...) asparagine glycans are attached at residues N410 and N525. One can recognise a PSI domain in the interval 525 to 579; it reads NCSLYRSCGDCLLARDPYCAWSGSSCKHVSLYQPQLATRPWIQDIEGASAKDLCS. 2 cysteine pairs are disulfide-bonded: C526/C543 and C611/C656. One can recognise an Ig-like C2-type domain in the interval 604 to 663; the sequence is NTVNTLACPLLSNLATRLWLRNGAPVNASASCHVLPTGDLLLVGTQQLGEFQCWSLEEGF. An N-linked (GlcNAc...) asparagine glycan is attached at N630. The helical transmembrane segment at 718–738 threads the bilayer; the sequence is FLVMCTLFVLAVLLPVLFLLY. Residues 739 to 837 lie on the Cytoplasmic side of the membrane; the sequence is RHRNSMKVFL…LGSEIRDSVV (99 aa). Positions 767–805 are disordered; that stretch reads PETRPLNGLGPPSTPLDHRGYQSLSDSPPGSRVFTESEK. A phosphoserine mark is found at S793, S818, and S830.

Belongs to the semaphorin family.

The protein localises to the membrane. Functionally, inhibits axonal extension by providing local signals to specify territories inaccessible for growing axons. In Homo sapiens (Human), this protein is Semaphorin-4B.